We begin with the raw amino-acid sequence, 688 residues long: Elongation factor G (688 aa).

A tr-type G domain is found at 8-282 (EKTRNIGIMA…AIIDYLPSPM (275 aa)). GTP contacts are provided by residues 17–24 (AHIDAGKT), 81–85 (DTPGH), and 135–138 (NKMD).

It belongs to the TRAFAC class translation factor GTPase superfamily. Classic translation factor GTPase family. EF-G/EF-2 subfamily.

It is found in the cytoplasm. Catalyzes the GTP-dependent ribosomal translocation step during translation elongation. During this step, the ribosome changes from the pre-translocational (PRE) to the post-translocational (POST) state as the newly formed A-site-bound peptidyl-tRNA and P-site-bound deacylated tRNA move to the P and E sites, respectively. Catalyzes the coordinated movement of the two tRNA molecules, the mRNA and conformational changes in the ribosome. The polypeptide is Elongation factor G (Phytoplasma mali (strain AT)).